Reading from the N-terminus, the 665-residue chain is PR5-like receptor kinase (665 aa).

An N-terminal signal peptide occupies residues 1–24 (MVEGFSLSLMFLLVSHFFVSGVMS). At 25-276 (RNFTIENKCD…TKQKSSWKLK (252 aa)) the chain is on the extracellular side. N-linked (GlcNAc...) asparagine glycosylation is found at Asn-26 and Asn-88. 8 disulfide bridges follow: Cys-33-Cys-249, Cys-81-Cys-91, Cys-96-Cys-103, Cys-153-Cys-238, Cys-158-Cys-221, Cys-166-Cys-184, Cys-188-Cys-197, and Cys-198-Cys-208. The N-linked (GlcNAc...) asparagine glycan is linked to Asn-163. Asn-233 is a glycosylation site (N-linked (GlcNAc...) asparagine). The chain crosses the membrane as a helical span at residues 277–297 (LIVGVSAALTLMILIVVVIIV). The Cytoplasmic portion of the chain corresponds to 298 to 665 (RTKNMRNSEW…DVLQHGSRSS (368 aa)). Positions 331–620 (NSFAHVLGKG…ALQVPPNPLL (290 aa)) constitute a Protein kinase domain. Residues 337-345 (LGKGGFGTV) and Lys-360 contribute to the ATP site. Catalysis depends on Asp-455, which acts as the Proton acceptor.

In the N-terminal section; belongs to the thaumatin family. This sequence in the C-terminal section; belongs to the protein kinase superfamily. Ser/Thr protein kinase family. Autophosphorylated in vitro. In terms of tissue distribution, expressed in roots. Expressed at low levels in stems.

The protein localises to the membrane. It catalyses the reaction L-seryl-[protein] + ATP = O-phospho-L-seryl-[protein] + ADP + H(+). The catalysed reaction is L-threonyl-[protein] + ATP = O-phospho-L-threonyl-[protein] + ADP + H(+). Functionally, possesses kinase activity in vitro. In Arabidopsis thaliana (Mouse-ear cress), this protein is PR5-like receptor kinase.